A 1048-amino-acid polypeptide reads, in one-letter code: Transcription factor mef2A (1048 aa).

The region spanning 1–61 (MGRNKITIEK…NKLFQYSSRD (61 aa)) is the MADS-box domain. Positions 74 to 85 (DNTRKNLTNQDY) are enriched in polar residues. Disordered stretches follow at residues 74–263 (DNTR…QAAQ), 294–339 (QQQH…QQQQ), 386–812 (GIYG…NINT), and 916–1048 (LLLT…EPKN). The span at 97–110 (DDEDGDDDGDEDLG) shows a compositional bias: acidic residues. Composition is skewed to low complexity over residues 130 to 205 (NNNN…NANH), 212 to 263 (GNSA…QAAQ), 294 to 303 (QQQHQQQQQN), 327 to 339 (QQQQQMQHSQQQQ), 393 to 437 (PPQM…IMNK), 446 to 466 (YYDYNGYPQQQQPPQNYNSNG), and 481 to 500 (QQQSANPYIQQQQQPQHQSP). A coiled-coil region spans residues 249–304 (NNNSNGYQQQQQAAQQAVQQAQMAQQMHLQQQQQYQQLQHIQQQQQQQHQQQQQNM). The span at 506 to 522 (YSPQQQSPVLNSQNGHH) shows a compositional bias: polar residues. Residues 529-539 (HQMHHQQHQHQ) are compositionally biased toward basic residues. The segment covering 540–593 (QHPQMQQQQQQQQQHQQHPQMQQIQQQQHPQMQQHQQHQQQHPQMQQQHMNNHQ) has biased composition (low complexity). Positions 600-618 (NSSPEINSQKNVHSSPLIM) are enriched in polar residues. Residues 619–699 (NSNNNNNNNN…NSNNGNNNNN (81 aa)) are compositionally biased toward low complexity. A compositionally biased stretch (polar residues) spans 715 to 736 (SSPTIPEQPSINVSTSSNSAHV). Low complexity-rich tracts occupy residues 738–802 (NNIT…SSST), 924–960 (SNNSNSSNNNNNNNNNNNNTNNNNISGNGSSSSSSSS), and 982–1029 (NNNN…NNSN).

It is found in the nucleus. Its function is as follows. Transcription factor that regulates cell differentiation during development. Seems to negatively regulate prestalk gene expression and positively regulate prespore gene expression. In Dictyostelium discoideum (Social amoeba), this protein is Transcription factor mef2A (mef2A).